Reading from the N-terminus, the 209-residue chain is Octanoyltransferase (209 aa).

The 180-residue stretch at 30-209 folds into the BPL/LPL catalytic domain; sequence VNEPEIVYLV…IQTEFNKIFT (180 aa). Residues 69–76, 143–145, and 156–158 each bind substrate; these read RGGKFTFH, AIG, and GVA. The active-site Acyl-thioester intermediate is the Cys174.

It belongs to the LipB family.

Its subcellular location is the cytoplasm. It catalyses the reaction octanoyl-[ACP] + L-lysyl-[protein] = N(6)-octanoyl-L-lysyl-[protein] + holo-[ACP] + H(+). It functions in the pathway protein modification; protein lipoylation via endogenous pathway; protein N(6)-(lipoyl)lysine from octanoyl-[acyl-carrier-protein]: step 1/2. Its function is as follows. Catalyzes the transfer of endogenously produced octanoic acid from octanoyl-acyl-carrier-protein onto the lipoyl domains of lipoate-dependent enzymes. Lipoyl-ACP can also act as a substrate although octanoyl-ACP is likely to be the physiological substrate. The polypeptide is Octanoyltransferase (Rickettsia canadensis (strain McKiel)).